The chain runs to 324 residues: Glyoxylate/hydroxypyruvate reductase B (324 aa).

Catalysis depends on residues Arg-237 and Glu-266. His-285 (proton donor) is an active-site residue.

The protein belongs to the D-isomer specific 2-hydroxyacid dehydrogenase family. GhrB subfamily. In terms of assembly, homodimer.

The protein resides in the cytoplasm. It catalyses the reaction glycolate + NADP(+) = glyoxylate + NADPH + H(+). The enzyme catalyses (R)-glycerate + NAD(+) = 3-hydroxypyruvate + NADH + H(+). The catalysed reaction is (R)-glycerate + NADP(+) = 3-hydroxypyruvate + NADPH + H(+). Its function is as follows. Catalyzes the NADPH-dependent reduction of glyoxylate and hydroxypyruvate into glycolate and glycerate, respectively. The chain is Glyoxylate/hydroxypyruvate reductase B from Shigella flexneri.